The chain runs to 172 residues: Sec-independent protein translocase protein TatB (172 aa).

Residues 1–21 (MFDIGWSELLVIGVVALIAIG) form a helical membrane-spanning segment.

The protein belongs to the TatB family. In terms of assembly, the Tat system comprises two distinct complexes: a TatABC complex, containing multiple copies of TatA, TatB and TatC subunits, and a separate TatA complex, containing only TatA subunits. Substrates initially bind to the TatABC complex, which probably triggers association of the separate TatA complex to form the active translocon.

Its subcellular location is the cell inner membrane. Its function is as follows. Part of the twin-arginine translocation (Tat) system that transports large folded proteins containing a characteristic twin-arginine motif in their signal peptide across membranes. Together with TatC, TatB is part of a receptor directly interacting with Tat signal peptides. TatB may form an oligomeric binding site that transiently accommodates folded Tat precursor proteins before their translocation. This Rhodopseudomonas palustris (strain BisB18) protein is Sec-independent protein translocase protein TatB.